A 146-amino-acid chain; its full sequence is Flavodoxin (146 aa).

Positions 4–143 constitute a Flavodoxin-like domain; that stretch reads SLIVYGSTTG…EIVSWGSGIA (140 aa).

The protein belongs to the flavodoxin family. Requires FMN as cofactor.

Functionally, low-potential electron donor to a number of redox enzymes. This is Flavodoxin from Maridesulfovibrio salexigens (strain ATCC 14822 / DSM 2638 / NCIMB 8403 / VKM B-1763) (Desulfovibrio salexigens).